Here is a 156-residue protein sequence, read N- to C-terminus: Ribosomal RNA large subunit methyltransferase H (156 aa).

Residues Leu-73, Gly-104, and 123 to 128 each bind S-adenosyl-L-methionine; that span reads LSKLTL.

This sequence belongs to the RNA methyltransferase RlmH family. In terms of assembly, homodimer.

The protein resides in the cytoplasm. It catalyses the reaction pseudouridine(1915) in 23S rRNA + S-adenosyl-L-methionine = N(3)-methylpseudouridine(1915) in 23S rRNA + S-adenosyl-L-homocysteine + H(+). Its function is as follows. Specifically methylates the pseudouridine at position 1915 (m3Psi1915) in 23S rRNA. The sequence is that of Ribosomal RNA large subunit methyltransferase H from Hydrogenovibrio crunogenus (strain DSM 25203 / XCL-2) (Thiomicrospira crunogena).